Consider the following 378-residue polypeptide: Merozoite surface protein P41 (378 aa).

Residues 1 to 20 form the signal peptide; sequence MKGVIFCLVVLLWRQAWVSS. The region spanning 21–133 is the 6-Cys 1 domain; that stretch reads KSHKCDFTKE…LKINRFLKDD (113 aa). 3 disulfide bridges follow: Cys25-Cys42, Cys56-Cys113, and Cys64-Cys111. 4 N-linked (GlcNAc...) asparagine glycosylation sites follow: Asn77, Asn149, Asn182, and Asn205. One can recognise a 6-Cys 2 domain in the interval 241–375; the sequence is VIKGCDFGNN…GESEVVLNSF (135 aa). 3 disulfides stabilise this stretch: Cys245–Cys270, Cys284–Cys348, and Cys297–Cys346. N-linked (GlcNAc...) asparagine glycosylation occurs at Asn351.

As to quaternary structure, heterodimer; heterodimerizes with PF12. May form an antiparallel heterodimer with PF12. Post-translationally, processed into a soluble form.

The protein resides in the cell surface. The protein localises to the cell membrane. The polypeptide is Merozoite surface protein P41 (PF41) (Plasmodium falciparum (isolate 3D7)).